Consider the following 935-residue polypeptide: Isoleucine--tRNA ligase (935 aa).

Positions 58–68 match the 'HIGH' region motif; the sequence is PYANGNLHLGH. Glutamate 559 contributes to the L-isoleucyl-5'-AMP binding site. Positions 600–604 match the 'KMSKS' region motif; sequence KMSKS. Lysine 603 lines the ATP pocket. Zn(2+)-binding residues include cysteine 898, cysteine 901, cysteine 918, and cysteine 921.

This sequence belongs to the class-I aminoacyl-tRNA synthetase family. IleS type 1 subfamily. In terms of assembly, monomer. Zn(2+) serves as cofactor.

Its subcellular location is the cytoplasm. It catalyses the reaction tRNA(Ile) + L-isoleucine + ATP = L-isoleucyl-tRNA(Ile) + AMP + diphosphate. Functionally, catalyzes the attachment of isoleucine to tRNA(Ile). As IleRS can inadvertently accommodate and process structurally similar amino acids such as valine, to avoid such errors it has two additional distinct tRNA(Ile)-dependent editing activities. One activity is designated as 'pretransfer' editing and involves the hydrolysis of activated Val-AMP. The other activity is designated 'posttransfer' editing and involves deacylation of mischarged Val-tRNA(Ile). The sequence is that of Isoleucine--tRNA ligase from Haemophilus ducreyi (strain 35000HP / ATCC 700724).